Reading from the N-terminus, the 248-residue chain is Mannose-binding protein C (248 aa).

An N-terminal signal peptide occupies residues 1–20 (MSLFPSLPLLLLSVVAASYS). Positions 42–99 (GINGFPGKDGRDGTKGEKGEPGQGLRGLQGPPGKLGPPGNPGPSGSPGPKGQKGDPGK) constitute a Collagen-like domain. Residues 43-111 (INGFPGKDGR…DCDSSLAASE (69 aa)) are disordered. Proline 47 bears the 4-hydroxyproline mark. The span at 49–61 (KDGRDGTKGEKGE) shows a compositional bias: basic and acidic residues. 4 positions are modified to 4-hydroxyproline: proline 73, proline 79, proline 82, and proline 88. The span at 75–87 (KLGPPGNPGPSGS) shows a compositional bias: pro residues. Residues 93 to 102 (QKGDPGKSPD) show a composition bias toward basic and acidic residues. Residues 112–130 (RKALQTEMARIKKWLTFSL) are a coiled coil. The C-type lectin domain occupies 134–245 (VGNKFFLTNG…CSSSHLAVCE (112 aa)). 2 disulfide bridges follow: cysteine 155-cysteine 244 and cysteine 222-cysteine 236.

Oligomeric complex of 3 or more homotrimers. Interacts with MASP1 and MASP2. Interacts with MEP1A and MEP1B and may inhibit their catalytic activity. In terms of processing, hydroxylation on proline residues within the sequence motif, GXPG, is most likely to be 4-hydroxy as this fits the requirement for 4-hydroxylation in vertebrates.

The protein resides in the secreted. Functionally, calcium-dependent lectin involved in innate immune defense. Binds mannose, fucose and N-acetylglucosamine on different microorganisms and activates the lectin complement pathway. Binds to late apoptotic cells, as well as to apoptotic blebs and to necrotic cells, but not to early apoptotic cells, facilitating their uptake by macrophages. This Pongo pygmaeus (Bornean orangutan) protein is Mannose-binding protein C (MBL2).